We begin with the raw amino-acid sequence, 142 residues long: Hemoglobin subunit alpha-2 (142 aa).

Residues 2–142 (VLSAADKSNV…VSTVLTSKYR (141 aa)) form the Globin domain. O2 is bound at residue His59. Heme b is bound at residue His88.

This sequence belongs to the globin family. As to quaternary structure, heterotetramer of two alpha chains and two beta chains.

Involved in oxygen transport from the lung to the various peripheral tissues. Its function is as follows. Hemopressin acts as an antagonist peptide of the cannabinoid receptor CNR1. Hemopressin-binding efficiently blocks cannabinoid receptor CNR1 and subsequent signaling. This chain is Hemoglobin subunit alpha-2 (HBA2), found in Capra hircus (Goat).